The sequence spans 445 residues: Ubiquitin carboxyl-terminal hydrolase MINDY-3 (445 aa).

Cysteine 51 (nucleophile) is an active-site residue. Serine 125 is subject to Phosphoserine. Histidine 287 (proton acceptor) is an active-site residue.

The protein belongs to the MINDY deubiquitinase family. FAM188 subfamily. In terms of assembly, interacts with COPS5. As to expression, widely expressed with high levels in heart, skeletal muscle, and kidney, and low levels in liver and brain. Also expressed in lung (at protein level).

It is found in the nucleus. It carries out the reaction Thiol-dependent hydrolysis of ester, thioester, amide, peptide and isopeptide bonds formed by the C-terminal Gly of ubiquitin (a 76-residue protein attached to proteins as an intracellular targeting signal).. In terms of biological role, hydrolase that can remove 'Lys-48'-linked conjugated ubiquitin from proteins. In Homo sapiens (Human), this protein is Ubiquitin carboxyl-terminal hydrolase MINDY-3.